A 79-amino-acid polypeptide reads, in one-letter code: D-alanyl carrier protein (79 aa).

Residues 1–77 (MDIKSEVLAI…KIVAGVTELC (77 aa)) enclose the Carrier domain. Ser35 is subject to O-(pantetheine 4'-phosphoryl)serine.

It belongs to the DltC family. 4'-phosphopantetheine is transferred from CoA to a specific serine of apo-DCP.

Its subcellular location is the cytoplasm. Its pathway is cell wall biogenesis; lipoteichoic acid biosynthesis. Its function is as follows. Carrier protein involved in the D-alanylation of lipoteichoic acid (LTA). The loading of thioester-linked D-alanine onto DltC is catalyzed by D-alanine--D-alanyl carrier protein ligase DltA. The DltC-carried D-alanyl group is further transferred to cell membrane phosphatidylglycerol (PG) by forming an ester bond, probably catalyzed by DltD. D-alanylation of LTA plays an important role in modulating the properties of the cell wall in Gram-positive bacteria, influencing the net charge of the cell wall. This is D-alanyl carrier protein from Streptococcus agalactiae serotype Ia (strain ATCC 27591 / A909 / CDC SS700).